The sequence spans 112 residues: Putative pterin-4-alpha-carbinolamine dehydratase (112 aa).

It belongs to the pterin-4-alpha-carbinolamine dehydratase family.

It carries out the reaction (4aS,6R)-4a-hydroxy-L-erythro-5,6,7,8-tetrahydrobiopterin = (6R)-L-erythro-6,7-dihydrobiopterin + H2O. The polypeptide is Putative pterin-4-alpha-carbinolamine dehydratase (Dechloromonas aromatica (strain RCB)).